A 120-amino-acid polypeptide reads, in one-letter code: MSQITSKGRRILDKKIRTFPVGFTSRKVAGHVLNISPYFLLAFSYAENKGQSAFEEIKGSNVIDMSCVICFNFSCHLFVVIFISRSTETIPTTKLLLSKYIFYCVNALELTLFLSYKSYS.

The chain crosses the membrane as a helical span at residues 63-83 (IDMSCVICFNFSCHLFVVIFI).

The protein localises to the membrane. This is an uncharacterized protein from Saccharomyces cerevisiae (strain ATCC 204508 / S288c) (Baker's yeast).